Reading from the N-terminus, the 206-residue chain is N-(5'-phosphoribosyl)anthranilate isomerase (206 aa).

This sequence belongs to the TrpF family.

The catalysed reaction is N-(5-phospho-beta-D-ribosyl)anthranilate = 1-(2-carboxyphenylamino)-1-deoxy-D-ribulose 5-phosphate. The protein operates within amino-acid biosynthesis; L-tryptophan biosynthesis; L-tryptophan from chorismate: step 3/5. The protein is N-(5'-phosphoribosyl)anthranilate isomerase of Pseudomonas savastanoi pv. phaseolicola (strain 1448A / Race 6) (Pseudomonas syringae pv. phaseolicola (strain 1448A / Race 6)).